The chain runs to 197 residues: ATP-dependent Clp protease proteolytic subunit 1 (197 aa).

S96 acts as the Nucleophile in catalysis. Residue H121 is part of the active site.

The protein belongs to the peptidase S14 family. As to quaternary structure, fourteen ClpP subunits assemble into 2 heptameric rings which stack back to back to give a disk-like structure with a central cavity, resembling the structure of eukaryotic proteasomes.

It is found in the cytoplasm. It carries out the reaction Hydrolysis of proteins to small peptides in the presence of ATP and magnesium. alpha-casein is the usual test substrate. In the absence of ATP, only oligopeptides shorter than five residues are hydrolyzed (such as succinyl-Leu-Tyr-|-NHMec, and Leu-Tyr-Leu-|-Tyr-Trp, in which cleavage of the -Tyr-|-Leu- and -Tyr-|-Trp bonds also occurs).. In terms of biological role, cleaves peptides in various proteins in a process that requires ATP hydrolysis. Has a chymotrypsin-like activity. Plays a major role in the degradation of misfolded proteins. The protein is ATP-dependent Clp protease proteolytic subunit 1 of Synechococcus sp. (strain ATCC 27144 / PCC 6301 / SAUG 1402/1) (Anacystis nidulans).